The primary structure comprises 166 residues: Vasopressin-neurophysin 2-copeptin (166 aa).

Positions 1 to 19 (MPDATLPACFLGLLALTSA) are cleaved as a signal peptide. A disulfide bond links cysteine 20 and cysteine 25. Glycine 28 is subject to Glycine amide. 7 disulfides stabilise this stretch: cysteine 41/cysteine 85, cysteine 44/cysteine 58, cysteine 52/cysteine 75, cysteine 59/cysteine 65, cysteine 92/cysteine 104, cysteine 98/cysteine 116, and cysteine 105/cysteine 110. N-linked (GlcNAc...) asparagine glycosylation occurs at asparagine 133.

It belongs to the vasopressin/oxytocin family. In terms of assembly, interacts with vasopressin receptors V1bR/AVPR1B (Ki=85 pM), V1aR/AVPR1A (Ki=0.6 nM) and V2R/AVPR2 (Ki=4.9 nM). Interacts with oxytocin receptor (OXTR) (Ki=110 nM). A shorter neurophysin molecule (32-123) is called neurophysin-I and is derived from the complete protein (called neurophysin III) by proteolytic degradation (in vivo or after extraction).

Its subcellular location is the secreted. Neurophysin 2 specifically binds vasopressin. In terms of biological role, vasopressin has a direct antidiuretic action on the kidney, it also causes vasoconstriction of the peripheral vessels. Acts by binding to vasopressin receptors (V1bR/AVPR1B, V1aR/AVPR1A, and V2R/AVPR2). This is Vasopressin-neurophysin 2-copeptin (AVP) from Sus scrofa (Pig).